The sequence spans 231 residues: Small ribosomal subunit protein uS3 (231 aa).

The 69-residue stretch at 38–106 (IRVYLKNRLK…KTFVNIMEIK (69 aa)) folds into the KH type-2 domain.

The protein belongs to the universal ribosomal protein uS3 family. Part of the 30S ribosomal subunit. Forms a tight complex with proteins S10 and S14.

Binds the lower part of the 30S subunit head. Binds mRNA in the 70S ribosome, positioning it for translation. The protein is Small ribosomal subunit protein uS3 of Endomicrobium trichonymphae.